The chain runs to 165 residues: Calcium-binding protein H (165 aa).

4 EF-hand domains span residues 7 to 42 (QIEK…MGSK), 43 to 78 (YPEK…RYQD), 88 to 123 (YFQD…IGSD), and 124 to 159 (HPKE…TIRS). Ca(2+)-binding residues include D20, D22, N24, E26, E31, D56, D58, E60, K62, E67, D101, N103, D105, R107, E112, D137, N139, D141, Y143, and E148.

The polypeptide is Calcium-binding protein H (cbpH) (Dictyostelium discoideum (Social amoeba)).